A 110-amino-acid chain; its full sequence is Flagellar hook-basal body complex protein FliE (110 aa).

The protein belongs to the FliE family.

It localises to the bacterial flagellum basal body. This chain is Flagellar hook-basal body complex protein FliE, found in Pseudomonas putida (strain GB-1).